A 414-amino-acid polypeptide reads, in one-letter code: MRSWPSPAVPTLSGPSVPLRLYDTSDQAVRSVNPGAVSGMYVCGITPYDATHLGHAATYLTFDLINRVLRANGHEVHYVQNVTDVDDPLFERAARDGIDWRDLGARETDLFCEDMQALRVLAPQDYIGAVESIDEVIALVGRLLENGAAYIVDDPEFPDVYYRTDATEQFGYESGYDRATMERFFAERGGDPDRPGKRDPLDALLWRAARPGEPSWPSPQGPGRPGWHIECAAIAQNRLGVGFDIQGGGSDLIFPHHEFSAAHVEADTGERRFARHYVHAAMIGLDGEKMSKSRGNLVFVSTLRRAGVDPAAIRLGLFEGHYRTDRAWSDEVLARAQARLDLWRNAFAAASSPDGAELVGRLRRYLADDLDTPKALSALDAWAHRAVTSGGPDPDGPSTVATAVDALLGVAVSA.

Position 43 (Cys43) interacts with Zn(2+). L-cysteinyl-5'-AMP is bound by residues 43–46, Thr58, and 81–83; these read CGIT and NVT. The 'HIGH' region signature appears at 45–55; it reads ITPYDATHLGH. A 'ERGGDP' region motif is present at residues 187–192; sequence ERGGDP. Trp227 contributes to the L-cysteinyl-5'-AMP binding site. Residue Cys231 coordinates Zn(2+). 249-251 serves as a coordination point for L-cysteinyl-5'-AMP; the sequence is GSD. His256 lines the Zn(2+) pocket. Residue Ile283 participates in L-cysteinyl-5'-AMP binding. The 'KMSKS' region signature appears at 289–293; sequence KMSKS.

The protein belongs to the class-I aminoacyl-tRNA synthetase family. MshC subfamily. As to quaternary structure, monomer. It depends on Zn(2+) as a cofactor.

It catalyses the reaction 1D-myo-inositol 2-amino-2-deoxy-alpha-D-glucopyranoside + L-cysteine + ATP = 1D-myo-inositol 2-(L-cysteinylamino)-2-deoxy-alpha-D-glucopyranoside + AMP + diphosphate + H(+). Functionally, catalyzes the ATP-dependent condensation of GlcN-Ins and L-cysteine to form L-Cys-GlcN-Ins. The sequence is that of L-cysteine:1D-myo-inositol 2-amino-2-deoxy-alpha-D-glucopyranoside ligase from Tsukamurella paurometabola (strain ATCC 8368 / DSM 20162 / CCUG 35730 / CIP 100753 / JCM 10117 / KCTC 9821 / NBRC 16120 / NCIMB 702349 / NCTC 13040) (Corynebacterium paurometabolum).